Reading from the N-terminus, the 810-residue chain is Probable inorganic carbon transporter subunit DabA (810 aa).

Zn(2+) contacts are provided by cysteine 347, aspartate 349, histidine 509, and cysteine 524.

The protein belongs to the inorganic carbon transporter (TC 9.A.2) DabA family. Forms a complex with DabB. Requires Zn(2+) as cofactor.

It is found in the cell inner membrane. Part of an energy-coupled inorganic carbon pump. The sequence is that of Probable inorganic carbon transporter subunit DabA from Marinomonas sp. (strain MWYL1).